Here is a 436-residue protein sequence, read N- to C-terminus: Bifunctional protein GlmU (436 aa).

Positions 1-225 (MNNNTSIIIL…EQNFMGINDK (225 aa)) are pyrophosphorylase. UDP-N-acetyl-alpha-D-glucosamine contacts are provided by residues 10–13 (LAAG), Lys-24, Gln-76, and 83–84 (GT). Mg(2+) is bound at residue Asp-104. Residues Gly-137, Glu-151, Asn-166, and Asn-223 each coordinate UDP-N-acetyl-alpha-D-glucosamine. Asn-223 lines the Mg(2+) pocket. The segment at 226 to 246 (FQLSIAEKIMQDEIKQNLMKA) is linker. The N-acetyltransferase stretch occupies residues 247–436 (GVLMRMPESI…KFFGKDDVKK (190 aa)). The UDP-N-acetyl-alpha-D-glucosamine site is built by Arg-310 and Lys-327. His-338 functions as the Proton acceptor in the catalytic mechanism. UDP-N-acetyl-alpha-D-glucosamine-binding residues include Tyr-341 and Asn-352. Residues 361–362 (NY), Ser-380, Ala-398, and Arg-415 each bind acetyl-CoA.

In the N-terminal section; belongs to the N-acetylglucosamine-1-phosphate uridyltransferase family. It in the C-terminal section; belongs to the transferase hexapeptide repeat family. As to quaternary structure, homotrimer. It depends on Mg(2+) as a cofactor.

The protein resides in the cytoplasm. It carries out the reaction alpha-D-glucosamine 1-phosphate + acetyl-CoA = N-acetyl-alpha-D-glucosamine 1-phosphate + CoA + H(+). The catalysed reaction is N-acetyl-alpha-D-glucosamine 1-phosphate + UTP + H(+) = UDP-N-acetyl-alpha-D-glucosamine + diphosphate. The protein operates within nucleotide-sugar biosynthesis; UDP-N-acetyl-alpha-D-glucosamine biosynthesis; N-acetyl-alpha-D-glucosamine 1-phosphate from alpha-D-glucosamine 6-phosphate (route II): step 2/2. Its pathway is nucleotide-sugar biosynthesis; UDP-N-acetyl-alpha-D-glucosamine biosynthesis; UDP-N-acetyl-alpha-D-glucosamine from N-acetyl-alpha-D-glucosamine 1-phosphate: step 1/1. It participates in bacterial outer membrane biogenesis; LPS lipid A biosynthesis. Catalyzes the last two sequential reactions in the de novo biosynthetic pathway for UDP-N-acetylglucosamine (UDP-GlcNAc). The C-terminal domain catalyzes the transfer of acetyl group from acetyl coenzyme A to glucosamine-1-phosphate (GlcN-1-P) to produce N-acetylglucosamine-1-phosphate (GlcNAc-1-P), which is converted into UDP-GlcNAc by the transfer of uridine 5-monophosphate (from uridine 5-triphosphate), a reaction catalyzed by the N-terminal domain. This is Bifunctional protein GlmU from Campylobacter concisus (strain 13826).